The primary structure comprises 391 residues: Inner membrane protein YdcO (391 aa).

The Cytoplasmic portion of the chain corresponds to 1–9; that stretch reads MRLFSIPPP. A helical transmembrane segment spans residues 10 to 30; sequence TLLAGFLAVLIGYASSAAIIW. Residues 31-42 lie on the Periplasmic side of the membrane; that stretch reads QAAIVAGATTAQ. Residues 43–63 traverse the membrane as a helical segment; it reads ISGWMTALGLAMGVSTLTLTL. Topologically, residues 64 to 93 are cytoplasmic; the sequence is WYRVPVLTAWSTPGAALLVTGLQGLTLNEA. Residues 94–114 form a helical membrane-spanning segment; that stretch reads IGVFIVTNALIVLCGITGLFA. At 115–123 the chain is on the periplasmic side; the sequence is RLMRIIPHS. A helical transmembrane segment spans residues 124 to 144; the sequence is LAAAMLAGILLRFGLQAFASL. At 145–167 the chain is on the cytoplasmic side; sequence DGQFTLCGSMLLVWLATKAVAPR. The chain crosses the membrane as a helical span at residues 168-188; sequence YAVIAAMIIGIVIVIAQGDVV. The Periplasmic portion of the chain corresponds to 189–200; sequence TTDVVFKPVLPT. Residues 201 to 221 form a helical membrane-spanning segment; sequence YITPDFSFAHSLSVALPLFLV. At 222 to 246 the chain is on the cytoplasmic side; the sequence is TMASQNAPGIAAMKAAGYSAPVSPL. The chain crosses the membrane as a helical span at residues 247-267; that stretch reads IVFTGLLALVFSPFGVYSVGI. Residues 268–287 are Periplasmic-facing; the sequence is AAITAAICQSPEAHPDKDQR. Residues 288-308 traverse the membrane as a helical segment; that stretch reads WLAAAVAGIFYLLAGLFGSAI. Over 309–311 the chain is Cytoplasmic; the sequence is TGM. Residues 312 to 332 traverse the membrane as a helical segment; the sequence is MAALPVSWIQMLAGLALLSTI. At 333–361 the chain is on the periplasmic side; sequence GGSLYQALHNERERDAAVVAFLVTASGLT. A helical transmembrane segment spans residues 362–382; sequence LVGIGSAFWGLIAGGVCYVVL. At 383-391 the chain is on the cytoplasmic side; that stretch reads NLIADRNRY.

The protein localises to the cell inner membrane. The sequence is that of Inner membrane protein YdcO (ydcO) from Escherichia coli (strain K12).